A 594-amino-acid chain; its full sequence is Isocitrate dehydrogenase kinase/phosphatase (594 aa).

Residues 315–321 (APGIRGM) and K336 each bind ATP. D371 is a catalytic residue.

This sequence belongs to the AceK family.

It is found in the cytoplasm. It catalyses the reaction L-seryl-[isocitrate dehydrogenase] + ATP = O-phospho-L-seryl-[isocitrate dehydrogenase] + ADP + H(+). Its function is as follows. Bifunctional enzyme which can phosphorylate or dephosphorylate isocitrate dehydrogenase (IDH) on a specific serine residue. This is a regulatory mechanism which enables bacteria to bypass the Krebs cycle via the glyoxylate shunt in response to the source of carbon. When bacteria are grown on glucose, IDH is fully active and unphosphorylated, but when grown on acetate or ethanol, the activity of IDH declines drastically concomitant with its phosphorylation. This Klebsiella pneumoniae (strain 342) protein is Isocitrate dehydrogenase kinase/phosphatase.